The following is a 1577-amino-acid chain: Dynamin-binding protein (1577 aa).

Position 1 is an N-acetylmethionine (M1). SH3 domains follow at residues 2 to 61 (EAGS…IVTI), 66 to 126 (EGER…ELCL), 145 to 204 (YSMG…LLGP), and 243 to 302 (EPGT…LCPD). Disordered regions lie at residues 211–244 (SVSS…EEEP) and 335–395 (EEQR…WEMP). The segment covering 230-244 (VGEEEIGPDEDEEEP) has biased composition (acidic residues). Over residues 335-344 (EEQRHETSDH) the composition is skewed to basic and acidic residues. S496 carries the phosphoserine modification. Disordered regions lie at residues 591–624 (GSSK…TSPH) and 639–659 (VRPS…NAVS). Pro residues predominate over residues 639–649 (VRPSRPAPLPP). Phosphoserine is present on S684. Positions 693-757 (LVLVRIEEME…ELQQLREMTL (65 aa)) form a coiled coil. The DH domain maps to 784-967 (KRAKVIEELL…KEINVNINEY (184 aa)). Positions 1008-1217 (LKHLTGFAPQ…LKVAGREGNL (210 aa)) constitute a BAR domain. Positions 1136-1173 (ERAEKLKDKKTLEELQSARNNYEALNAQLLDELPKFHQ) form a coiled coil. Positions 1285–1348 (PPEKLFQAER…YSSFLKPYNP (64 aa)) constitute an SH3 5 domain. The tract at residues 1348–1487 (PRRSHSDASV…SVPGRNGQSQ (140 aa)) is disordered. The segment covering 1376-1405 (RQNSGSTLTFNPSSMAVSFTSGSCQKQPQD) has biased composition (polar residues). The span at 1419–1442 (SASLNPSNSESSPSRCPSDPDSTS) shows a compositional bias: low complexity. The 64-residue stretch at 1513-1576 (EGNQVYFAVY…PSNYIRKTEY (64 aa)) folds into the SH3 6 domain.

Binds DNM1 via its N-terminal SH3 domains. The C-terminal SH3 domain binds a complex containing actin, tubulin, Hsp70 and actin-regulatory proteins, such as ENAH, EVL, WIRE, CR16, WAVE1 and NAP1L1. Interacts with FASLG. Interacts (via SH3 domain 6) with WASL. Interacts (via SH3 domain 6) interacts with ENAH. Interacts (via C-terminal domain) with TJP1; required for the apical cell-cell junction localization of DNMBP. As to quaternary structure, (Microbial infection) Interacts (via SH3 domain 6) with L.monocytogenes InlC. In terms of tissue distribution, detected in heart, brain, lung, liver, skeletal muscle, kidney and pancreas.

The protein resides in the cytoplasm. It localises to the golgi apparatus. Its subcellular location is the golgi stack. It is found in the cytoskeleton. The protein localises to the synapse. The protein resides in the cell junction. Plays a critical role as a guanine nucleotide exchange factor (GEF) for CDC42 in several intracellular processes associated with the actin and microtubule cytoskeleton. Regulates the structure of apical junctions through F-actin organization in epithelial cells. Participates in the normal lumenogenesis of epithelial cell cysts by regulating spindle orientation. Plays a role in ciliogenesis. May play a role in membrane trafficking between the cell surface and the Golgi. The protein is Dynamin-binding protein of Homo sapiens (Human).